The sequence spans 268 residues: Glutamate racemase (268 aa).

Substrate-binding positions include 14 to 15 (DS) and 46 to 47 (YG). The active-site Proton donor/acceptor is Cys78. A substrate-binding site is contributed by 79-80 (NT). Cys192 (proton donor/acceptor) is an active-site residue. Substrate is bound at residue 193 to 194 (TH).

It belongs to the aspartate/glutamate racemases family.

The catalysed reaction is L-glutamate = D-glutamate. The protein operates within cell wall biogenesis; peptidoglycan biosynthesis. In terms of biological role, provides the (R)-glutamate required for cell wall biosynthesis. This Sphingopyxis alaskensis (strain DSM 13593 / LMG 18877 / RB2256) (Sphingomonas alaskensis) protein is Glutamate racemase.